The sequence spans 520 residues: Peptide chain release factor 3 (520 aa).

Residues 8–273 (EIRKTFAIIS…AYVDHAPMPS (266 aa)) enclose the tr-type G domain. Residues 17-24 (SHPDAGKT), 85-89 (DTPGH), and 139-142 (NKLD) each bind GTP.

The protein belongs to the TRAFAC class translation factor GTPase superfamily. Classic translation factor GTPase family. PrfC subfamily.

Its subcellular location is the cytoplasm. Increases the formation of ribosomal termination complexes and stimulates activities of RF-1 and RF-2. It binds guanine nucleotides and has strong preference for UGA stop codons. It may interact directly with the ribosome. The stimulation of RF-1 and RF-2 is significantly reduced by GTP and GDP, but not by GMP. This Macrococcus caseolyticus (strain JCSC5402) (Macrococcoides caseolyticum) protein is Peptide chain release factor 3.